Consider the following 191-residue polypeptide: dCTP deaminase (191 aa).

Residues 112 to 117 (KSTYAR), 136 to 138 (TLE), Gln157, Tyr173, and Gln183 each bind dCTP. The active-site Proton donor/acceptor is the Glu138.

Belongs to the dCTP deaminase family. In terms of assembly, homotrimer.

It catalyses the reaction dCTP + H2O + H(+) = dUTP + NH4(+). It participates in pyrimidine metabolism; dUMP biosynthesis; dUMP from dCTP (dUTP route): step 1/2. Catalyzes the deamination of dCTP to dUTP. This is dCTP deaminase from Psychrobacter cryohalolentis (strain ATCC BAA-1226 / DSM 17306 / VKM B-2378 / K5).